Reading from the N-terminus, the 306-residue chain is Pantothenate kinase (306 aa).

91-98 (GSVAVGKS) provides a ligand contact to ATP.

Belongs to the prokaryotic pantothenate kinase family.

The protein resides in the cytoplasm. It catalyses the reaction (R)-pantothenate + ATP = (R)-4'-phosphopantothenate + ADP + H(+). It participates in cofactor biosynthesis; coenzyme A biosynthesis; CoA from (R)-pantothenate: step 1/5. This chain is Pantothenate kinase, found in Streptococcus equi subsp. zooepidemicus (strain MGCS10565).